Consider the following 419-residue polypeptide: Carboxypeptidase A1 (419 aa).

The first 16 residues, 1 to 16 (MQGLLILSVLLGAALG), serve as a signal peptide directing secretion. Residues 17-110 (KEDFVGHQVL…QEQMFASQSR (94 aa)) constitute a propeptide, activation peptide. Residues 121-414 (TYHTLDEIYD…LGVLTIMEHT (294 aa)) enclose the Peptidase M14 domain. 2 residues coordinate Zn(2+): His179 and Glu182. Residues 179-182 (HSRE), Arg237, and 254-255 (NR) each bind substrate. Cysteines 248 and 271 form a disulfide. Position 306 (His306) interacts with Zn(2+). Substrate contacts are provided by residues 307–308 (SY) and Tyr358. Residue Glu380 is the Proton donor/acceptor of the active site.

The protein belongs to the peptidase M14 family. Monomer. May form a complex with proelastase 2. It depends on Zn(2+) as a cofactor. Pancreas.

The protein resides in the secreted. It catalyses the reaction Release of a C-terminal amino acid, but little or no action with -Asp, -Glu, -Arg, -Lys or -Pro.. It carries out the reaction leukotriene C4 + H2O = leukotriene F4 + glycine. Its activity is regulated as follows. Inhibited by interaction with the S.magnifica carboxypeptidase inhibitor SmCI. Carboxypeptidase that catalyzes the release of a C-terminal amino acid, but has little or no action with -Asp, -Glu, -Arg, -Lys or -Pro. Catalyzes the conversion of leukotriene C4 to leukotriene F4 via the hydrolysis of an amide bond. The protein is Carboxypeptidase A1 (CPA1) of Bos taurus (Bovine).